Reading from the N-terminus, the 148-residue chain is Arginine repressor (148 aa).

It belongs to the ArgR family.

The protein resides in the cytoplasm. It participates in amino-acid biosynthesis; L-arginine biosynthesis [regulation]. Regulates arginine biosynthesis genes. The sequence is that of Arginine repressor from Acidobacterium capsulatum (strain ATCC 51196 / DSM 11244 / BCRC 80197 / JCM 7670 / NBRC 15755 / NCIMB 13165 / 161).